The chain runs to 190 residues: Elongation factor P-like protein (190 aa).

This sequence belongs to the elongation factor P family.

The protein is Elongation factor P-like protein of Salmonella gallinarum (strain 287/91 / NCTC 13346).